An 86-amino-acid chain; its full sequence is Toxin Aam3 (86 aa).

Residues 1–19 (MNYLVMISLALLFMIGVES) form the signal peptide. The LCN-type CS-alpha/beta domain occupies 21 to 85 (RDGYIAQPNN…PIKIIGQKCT (65 aa)). 4 cysteine pairs are disulfide-bonded: C31–C84, C35–C56, C42–C66, and C46–C68.

This sequence belongs to the long (4 C-C) scorpion toxin superfamily. Sodium channel inhibitor family. Alpha subfamily. In terms of processing, the C-terminal basic residue is removed by a carboxypeptidase. Expressed by the venom gland.

It localises to the secreted. In terms of biological role, alpha toxins bind voltage-independently at site-3 of sodium channels (Nav) and inhibit the inactivation of the activated channels, thereby blocking neuronal transmission. The protein is Toxin Aam3 of Androctonus amoreuxi (African fattail scorpion).